The sequence spans 1724 residues: Sperm flagellar protein 2 (1724 aa).

The Calponin-homology (CH) domain maps to 1–105 (MSEILCQWLN…LLYQLYIALQ (105 aa)). Coiled coils occupy residues 170–203 (KAIE…KDLQ) and 255–351 (RRLL…REKE). Positions 545-576 (HERQKSGKTPPTQEDDKRDPVVNQEKVSKTQD) are disordered. A compositionally biased stretch (basic and acidic residues) spans 558 to 576 (EDDKRDPVVNQEKVSKTQD). A coiled-coil region spans residues 665–691 (NQAKLLEEALTGYKRKFLQLKKKKEQM). Positions 828 to 910 (EEKETEKKAG…PTAPPPPKAG (83 aa)) are disordered. Positions 853–862 (EAEKDKELHQ) are enriched in basic and acidic residues. A coiled-coil region spans residues 995 to 1021 (EDLWEDEETKAELHQRVNDLRDRLWDI). A compositionally biased stretch (basic and acidic residues) spans 1177 to 1194 (RLTEEEKEPPQLDSKEKS). Disordered stretches follow at residues 1177 to 1241 (RLTE…EMAE), 1580 to 1618 (VSPI…NANT), and 1704 to 1724 (SEHA…DEKK). The span at 1210–1221 (PKKKKTDKKGKG) shows a compositional bias: basic residues. The interval 1228–1580 (EVSPVTVTPE…MAEKTSISTV (353 aa)) is interaction with IFT20. Residues 1592–1607 (SSAKEDRELKEEKDDQ) show a composition bias toward basic and acidic residues.

As to quaternary structure, interacts (via C-terminus) with IFT20. Interacts with DYNC1I2. In terms of tissue distribution, highly expressed in testis, where it primarily localizes to late spermatocytes, round spermatids and elongating spermatids (at protein level). Found in Sertoli cells of the testis (at protein level). Expressed at lower levels in epididymis (at protein level). Detected in lung, brain, liver and kidney. Also detected in bone, cartilage, trachea, pituitary gland and eye. Expressed in osteoblasts and chondrocytes.

It localises to the cell projection. It is found in the cilium. The protein localises to the flagellum. The protein resides in the cytoplasm. Its subcellular location is the cytoskeleton. It localises to the golgi apparatus. Functionally, required for correct axoneme development in spermatozoa. Important for normal development of the manchette and sperm head morphology. Essential for male fertility. Plays a role in localization of the intraflagellar transport protein IFT20 to the manchette, suggesting function as an adapter for dynein-mediated protein transport during spermatogenesis. Also plays a role in bone growth where it seems to be required for normal osteoblast differentiation. This Mus musculus (Mouse) protein is Sperm flagellar protein 2 (Spef2).